We begin with the raw amino-acid sequence, 230 residues long: Orotidine 5'-phosphate decarboxylase (230 aa).

Residues Asp10, Lys31, 58-67 (DLKLHDIPNT), Thr117, Arg179, Gln188, Gly208, and Arg209 contribute to the substrate site. Lys60 functions as the Proton donor in the catalytic mechanism.

It belongs to the OMP decarboxylase family. Type 1 subfamily. As to quaternary structure, homodimer.

The enzyme catalyses orotidine 5'-phosphate + H(+) = UMP + CO2. The protein operates within pyrimidine metabolism; UMP biosynthesis via de novo pathway; UMP from orotate: step 2/2. Functionally, catalyzes the decarboxylation of orotidine 5'-monophosphate (OMP) to uridine 5'-monophosphate (UMP). This is Orotidine 5'-phosphate decarboxylase from Staphylococcus aureus (strain Mu3 / ATCC 700698).